Here is a 147-residue protein sequence, read N- to C-terminus: D-aminoacyl-tRNA deacylase (147 aa).

The Gly-cisPro motif, important for rejection of L-amino acids signature appears at 137–138; that stretch reads GP.

Belongs to the DTD family. In terms of assembly, homodimer.

Its subcellular location is the cytoplasm. The enzyme catalyses glycyl-tRNA(Ala) + H2O = tRNA(Ala) + glycine + H(+). It catalyses the reaction a D-aminoacyl-tRNA + H2O = a tRNA + a D-alpha-amino acid + H(+). Functionally, an aminoacyl-tRNA editing enzyme that deacylates mischarged D-aminoacyl-tRNAs. Also deacylates mischarged glycyl-tRNA(Ala), protecting cells against glycine mischarging by AlaRS. Acts via tRNA-based rather than protein-based catalysis; rejects L-amino acids rather than detecting D-amino acids in the active site. By recycling D-aminoacyl-tRNA to D-amino acids and free tRNA molecules, this enzyme counteracts the toxicity associated with the formation of D-aminoacyl-tRNA entities in vivo and helps enforce protein L-homochirality. This Jannaschia sp. (strain CCS1) protein is D-aminoacyl-tRNA deacylase.